The chain runs to 574 residues: Membrane protein insertase YidC (574 aa).

The next 6 membrane-spanning stretches (helical) occupy residues 6–26 (VFLI…WGKE), 350–370 (VIDY…FWVL), 376–396 (FLHN…LVLY), 447–467 (GGCL…WVLV), 491–511 (FILP…TPTP), and 525–545 (PLVF…YWVV).

It belongs to the OXA1/ALB3/YidC family. Type 1 subfamily. As to quaternary structure, interacts with the Sec translocase complex via SecD. Specifically interacts with transmembrane segments of nascent integral membrane proteins during membrane integration.

The protein localises to the cell inner membrane. Required for the insertion and/or proper folding and/or complex formation of integral membrane proteins into the membrane. Involved in integration of membrane proteins that insert both dependently and independently of the Sec translocase complex, as well as at least some lipoproteins. Aids folding of multispanning membrane proteins. The sequence is that of Membrane protein insertase YidC from Xanthomonas oryzae pv. oryzae (strain KACC10331 / KXO85).